The sequence spans 334 residues: Cytoskeleton protein RodZ (334 aa).

Residues 1 to 111 (MNTEATHDQN…LGKRRKKRDG (111 aa)) lie on the Cytoplasmic side of the membrane. Positions 19–71 (LRNAREQLGLSQQAVAERLCLKVSTVRDIEEDKAPSDLASTFLRGYIRSYARL) constitute an HTH cro/C1-type domain. The segment at residues 30–49 (QQAVAERLCLKVSTVRDIEE) is a DNA-binding region (H-T-H motif). Residues 112–132 (WLMSFTWLVLFVVVGLTGAWW) traverse the membrane as a helical; Signal-anchor for type II membrane protein segment. Residues 133-334 (WQNHKAQQEE…TLNAEPTPAQ (202 aa)) lie on the Periplasmic side of the membrane. The segment at 155-241 (NADKDSGQSV…PSALPTSQAG (87 aa)) is disordered. Residues 161 to 175 (GQSVPLDTGAVTSQD) are compositionally biased toward polar residues. Low complexity-rich tracts occupy residues 176-211 (TTPA…TVVA) and 219-241 (TAAT…SQAG).

Belongs to the RodZ family.

It localises to the cell inner membrane. Cytoskeletal protein that is involved in cell-shape control through regulation of the length of the long axis. This chain is Cytoskeleton protein RodZ, found in Salmonella dublin (strain CT_02021853).